Consider the following 343-residue polypeptide: Methionine import ATP-binding protein MetN (343 aa).

The ABC transporter domain occupies 2 to 241; the sequence is IKLSNITKVF…PKTPLAQKFI (240 aa). Residue 38–45 participates in ATP binding; that stretch reads GASGAGKS.

Belongs to the ABC transporter superfamily. Methionine importer (TC 3.A.1.24) family. The complex is composed of two ATP-binding proteins (MetN), two transmembrane proteins (MetI) and a solute-binding protein (MetQ).

Its subcellular location is the cell inner membrane. The catalysed reaction is L-methionine(out) + ATP + H2O = L-methionine(in) + ADP + phosphate + H(+). The enzyme catalyses D-methionine(out) + ATP + H2O = D-methionine(in) + ADP + phosphate + H(+). Functionally, part of the ABC transporter complex MetNIQ involved in methionine import. Responsible for energy coupling to the transport system. The protein is Methionine import ATP-binding protein MetN of Shigella flexneri serotype 5b (strain 8401).